The following is a 326-amino-acid chain: Target of rapamycin complex subunit LST8 (326 aa).

Methionine 1 is subject to N-acetylmethionine. 5 WD repeats span residues 1-37 (MNTSPGTVGSDPVILATAGYDHTVRFWQAHSGICTRT), 40-80 (HQDS…PIIS), 83-122 (GVNKNVASVGFHEDGRWMYTGGEDCTARIWDLRSRNLQCQ), 126-165 (QVNAPINCVCLHPNQAELIVGDQSGAIHIWDLKTDHNEQL), and 168-207 (EPEVSITSAHIDPDASYMAAVNSTGNCYVWNLTGGIGDEV). Threonine 51 carries the post-translational modification Phosphothreonine. Lysine 86 is covalently cross-linked (Glycyl lysine isopeptide (Lys-Gly) (interchain with G-Cter in SUMO3)). Glycyl lysine isopeptide (Lys-Gly) (interchain with G-Cter in SUMO3) cross-links involve residues lysine 215, lysine 245, and lysine 261. Residues 218 to 257 (AHTRYALQCRFSPDSTLLATCSADQTCKIWRTSNFSLMTE) form a WD 6 repeat. One copy of the WD 7 repeat lies at 268–309 (SSRGWMWGCAFSGDSQYIVTASSDNLARLWCVETGEIKREYG). Residue lysine 305 forms a Glycyl lysine isopeptide (Lys-Gly) (interchain with G-Cter in SUMO3); alternate linkage. Glycyl lysine isopeptide (Lys-Gly) (interchain with G-Cter in ubiquitin); alternate cross-links involve residues lysine 305 and lysine 313. A Glycyl lysine isopeptide (Lys-Gly) (interchain with G-Cter in SUMO1); alternate cross-link involves residue lysine 313.

Belongs to the WD repeat LST8 family. As to quaternary structure, part of the mechanistic target of rapamycin complex 1 (mTORC1) which contains MTOR, MLST8 and RPTOR. mTORC1 associates with AKT1S1/PRAS40, which inhibits its activity. mTORC1 binds to and is inhibited by FKBP12-rapamycin. Within mTORC1, interacts directly with MTOR and RPTOR. Component of the mechanistic target of rapamycin complex 2 (mTORC2), consisting in two heterotretramers composed of MTOR, MLST8, RICTOR and MAPKAP1/SIN1. Contrary to mTORC1, mTORC2 does not bind to and is not sensitive to FKBP12-rapamycin. mTORC1 and mTORC2 associate with DEPTOR, which regulates their activity. Interacts with RHEB. Interacts with MEAK7. Interacts with SIK3. Interacts with SLC38A7; this interaction promotes the recruitment of mTORC1 to the lysosome and its subsequent activation. Post-translationally, phosphorylation at Thr-51 by CDK1 promotes ubiquitination by the SCF(FBXW7) complex, followed by degradation. In terms of processing, ubiquitination by the SCF(FBXW7) and SCF(FBXW11) complexes following phosphorylation at Thr-51 by CDK1, leads to its degradation by the proteasome. Ubiquitination at Lys-305 and Lys-313 by TRAF2 via 'Lys-63'-linked polyubiquitin chains inhibits formation of the mTORC2 complex, while promoting formation of the mTORC1 complex: ubiquitination disrupts the interaction between MLST8 and MAPKAP1/SIN1 to favor mTORC1 assembly. Deubiquitination at Lys-305 and Lys-313 by OTUD7B promotes MLST8 interaction with MAPKAP1/SIN1, facilitating mTORC2 assembly. Sumoylation with SUMO1, SUMO2 and SUMO3 promotes assembly of both mTORC1 and mTORC2 complexes.

It localises to the lysosome membrane. It is found in the cytoplasm. Subunit of both mTORC1 and mTORC2, which regulates cell growth and survival in response to nutrient and hormonal signals. mTORC1 is activated in response to growth factors or amino acids. In response to nutrients, mTORC1 is recruited to the lysosome membrane and promotes protein, lipid and nucleotide synthesis by phosphorylating several substrates, such as ribosomal protein S6 kinase (RPS6KB1 and RPS6KB2) and EIF4EBP1 (4E-BP1). In the same time, it inhibits catabolic pathways by phosphorylating the autophagy initiation components ULK1 and ATG13, as well as transcription factor TFEB, a master regulators of lysosomal biogenesis and autophagy. The mTORC1 complex is inhibited in response to starvation and amino acid depletion. Within mTORC1, MLST8 interacts directly with MTOR and enhances its kinase activity. In nutrient-poor conditions, stabilizes the MTOR-RPTOR interaction and favors RPTOR-mediated inhibition of MTOR activity. As part of the mTORC2 complex, transduces signals from growth factors to pathways involved in proliferation, cytoskeletal organization, lipogenesis and anabolic output. mTORC2 is also activated by growth factors, but seems to be nutrient-insensitive. In response to growth factors, mTORC2 phosphorylates and activates AGC protein kinase family members, including AKT (AKT1, AKT2 and AKT3), PKC (PRKCA, PRKCB and PRKCE) and SGK1. mTORC2 functions upstream of Rho GTPases to regulate the actin cytoskeleton, probably by activating one or more Rho-type guanine nucleotide exchange factors. mTORC2 promotes the serum-induced formation of stress-fibers or F-actin. mTORC2 plays a critical role in AKT1 activation by mediating phosphorylation of different sites depending on the context, such as 'Thr-450', 'Ser-473', 'Ser-477' or 'Thr-479', facilitating the phosphorylation of the activation loop of AKT1 on 'Thr-308' by PDPK1/PDK1 which is a prerequisite for full activation. mTORC2 regulates the phosphorylation of SGK1 at 'Ser-422'. mTORC2 also modulates the phosphorylation of PRKCA on 'Ser-657'. Within mTORC2, MLST8 acts as a bridge between MAPKAP1/SIN1 and MTOR. The polypeptide is Target of rapamycin complex subunit LST8 (Bos taurus (Bovine)).